The following is a 133-amino-acid chain: Small ribosomal subunit protein bS6 (133 aa).

The protein belongs to the bacterial ribosomal protein bS6 family.

In terms of biological role, binds together with bS18 to 16S ribosomal RNA. The polypeptide is Small ribosomal subunit protein bS6 (Chlorobium luteolum (strain DSM 273 / BCRC 81028 / 2530) (Pelodictyon luteolum)).